The following is a 459-amino-acid chain: Bifunctional protein GlmU (459 aa).

The tract at residues Met1–Arg230 is pyrophosphorylase. UDP-N-acetyl-alpha-D-glucosamine-binding positions include Leu9–Gly12, Lys23, Gln73, and Gly78–Thr79. Asp103 provides a ligand contact to Mg(2+). The UDP-N-acetyl-alpha-D-glucosamine site is built by Gly140, Glu155, Asn170, and Asn228. A Mg(2+)-binding site is contributed by Asn228. Residues Val231–Asn251 form a linker region. The segment at Gly252–Ser459 is N-acetyltransferase. Residues Arg333 and Lys351 each contribute to the UDP-N-acetyl-alpha-D-glucosamine site. His363 acts as the Proton acceptor in catalysis. Residues Tyr366 and Asn377 each contribute to the UDP-N-acetyl-alpha-D-glucosamine site. Residues Asn386–Tyr387, Ala423, and Arg440 each bind acetyl-CoA.

In the N-terminal section; belongs to the N-acetylglucosamine-1-phosphate uridyltransferase family. This sequence in the C-terminal section; belongs to the transferase hexapeptide repeat family. In terms of assembly, homotrimer. Requires Mg(2+) as cofactor.

It localises to the cytoplasm. It carries out the reaction alpha-D-glucosamine 1-phosphate + acetyl-CoA = N-acetyl-alpha-D-glucosamine 1-phosphate + CoA + H(+). It catalyses the reaction N-acetyl-alpha-D-glucosamine 1-phosphate + UTP + H(+) = UDP-N-acetyl-alpha-D-glucosamine + diphosphate. Its pathway is nucleotide-sugar biosynthesis; UDP-N-acetyl-alpha-D-glucosamine biosynthesis; N-acetyl-alpha-D-glucosamine 1-phosphate from alpha-D-glucosamine 6-phosphate (route II): step 2/2. The protein operates within nucleotide-sugar biosynthesis; UDP-N-acetyl-alpha-D-glucosamine biosynthesis; UDP-N-acetyl-alpha-D-glucosamine from N-acetyl-alpha-D-glucosamine 1-phosphate: step 1/1. It functions in the pathway bacterial outer membrane biogenesis; LPS lipid A biosynthesis. Its function is as follows. Catalyzes the last two sequential reactions in the de novo biosynthetic pathway for UDP-N-acetylglucosamine (UDP-GlcNAc). The C-terminal domain catalyzes the transfer of acetyl group from acetyl coenzyme A to glucosamine-1-phosphate (GlcN-1-P) to produce N-acetylglucosamine-1-phosphate (GlcNAc-1-P), which is converted into UDP-GlcNAc by the transfer of uridine 5-monophosphate (from uridine 5-triphosphate), a reaction catalyzed by the N-terminal domain. This is Bifunctional protein GlmU from Bacillus thuringiensis subsp. konkukian (strain 97-27).